Here is a 576-residue protein sequence, read N- to C-terminus: Probable proline--tRNA ligase, mitochondrial (576 aa).

This sequence belongs to the class-II aminoacyl-tRNA synthetase family.

It is found in the mitochondrion. It catalyses the reaction tRNA(Pro) + L-proline + ATP = L-prolyl-tRNA(Pro) + AMP + diphosphate. The protein is Probable proline--tRNA ligase, mitochondrial (AIM10) of Saccharomyces cerevisiae (strain ATCC 204508 / S288c) (Baker's yeast).